Here is a 260-residue protein sequence, read N- to C-terminus: Glutamate racemase (260 aa).

Substrate is bound by residues 14–15 (DS) and 46–47 (YG). Catalysis depends on cysteine 77, which acts as the Proton donor/acceptor. Substrate is bound at residue 78–79 (NT). Catalysis depends on cysteine 188, which acts as the Proton donor/acceptor. 189–190 (TH) is a substrate binding site.

Belongs to the aspartate/glutamate racemases family.

It carries out the reaction L-glutamate = D-glutamate. Its pathway is cell wall biogenesis; peptidoglycan biosynthesis. Functionally, provides the (R)-glutamate required for cell wall biosynthesis. In Clostridium perfringens (strain 13 / Type A), this protein is Glutamate racemase.